The following is a 273-amino-acid chain: Ribosomal RNA small subunit methyltransferase I (273 aa).

This sequence belongs to the methyltransferase superfamily. RsmI family.

Its subcellular location is the cytoplasm. It carries out the reaction cytidine(1402) in 16S rRNA + S-adenosyl-L-methionine = 2'-O-methylcytidine(1402) in 16S rRNA + S-adenosyl-L-homocysteine + H(+). Functionally, catalyzes the 2'-O-methylation of the ribose of cytidine 1402 (C1402) in 16S rRNA. The sequence is that of Ribosomal RNA small subunit methyltransferase I from Xylella fastidiosa (strain Temecula1 / ATCC 700964).